A 223-amino-acid polypeptide reads, in one-letter code: Sigma non-opioid intracellular receptor 1 (223 aa).

The Lumenal portion of the chain corresponds to 1–9 (MQWAAGRRW). The tract at residues 2 to 8 (QWAAGRR) is targeting to endoplasmic reticulum-associated lipid droplets. The chain crosses the membrane as a helical span at residues 10-30 (AWITLFLTIVAVLIQAVWLWL). The Cytoplasmic portion of the chain corresponds to 31–223 (GTQSFVFQRE…LTTYLFGQDS (193 aa)). Residues 99–106 (SLSEYVLL) are important for ligand-binding. The interval 177–223 (VIPSTLAFALSDTIFSTQDFLTLFYTLRAYARGLRLELTTYLFGQDS) is C-terminal hydrophobic region.

This sequence belongs to the ERG2 family. In terms of assembly, homotrimer. Forms a ternary complex with ANK2 and ITPR3. The complex is disrupted by agonists. Interacts with KCNA4. Interacts with KCNA2; cocaine consumption leads to increased interaction. Interacts with RNF112 in an oxidative stress-regulated manner.

It localises to the nucleus inner membrane. Its subcellular location is the nucleus outer membrane. It is found in the nucleus envelope. The protein resides in the cytoplasmic vesicle. The protein localises to the endoplasmic reticulum membrane. It localises to the membrane. Its subcellular location is the lipid droplet. It is found in the cell junction. The protein resides in the cell membrane. The protein localises to the cell projection. It localises to the growth cone. Its subcellular location is the postsynaptic density membrane. Functions in lipid transport from the endoplasmic reticulum and is involved in a wide array of cellular functions probably through regulation of the biogenesis of lipid microdomains at the plasma membrane. Involved in the regulation of different receptors it plays a role in BDNF signaling and EGF signaling. Also regulates ion channels like the potassium channel and could modulate neurotransmitter release. Plays a role in calcium signaling through modulation together with ANK2 of the ITP3R-dependent calcium efflux at the endoplasmic reticulum. Plays a role in several other cell functions including proliferation, survival and death. Originally identified for its ability to bind various psychoactive drugs it is involved in learning processes, memory and mood alteration. Necessary for proper mitochondrial axonal transport in motor neurons, in particular the retrograde movement of mitochondria. Plays a role in protecting cells against oxidative stress-induced cell death via its interaction with RNF112. The sequence is that of Sigma non-opioid intracellular receptor 1 (SIGMAR1) from Trichosurus vulpecula (Brush-tailed possum).